We begin with the raw amino-acid sequence, 339 residues long: Transmembrane protein 120B (339 aa).

A coiled-coil region spans residues 1-77 (MSGQLERCER…ASREEAELVQ (77 aa)). Helical transmembrane passes span 102-124 (GLYLNLVLGNVNVTLLSNQAKFA), 132-152 (FKLYLTIILLLGAVACRFFLH), 159-179 (VFNFLLVWYYCTLTIRESILI), 187-207 (GWWVSHHYVSTFLSGVMLTWP), 270-290 (FLLPFLFCGHFWQLYNAVTLF), and 302-322 (QVFVLALTFLVLFLGNFLTTL).

The protein belongs to the TMEM120 family. In terms of assembly, heterooligomer with TMEM120A.

It is found in the nucleus inner membrane. Functionally, necessary for efficient adipogenesis. Does not show ion channel activity. The sequence is that of Transmembrane protein 120B (TMEM120B) from Bos taurus (Bovine).